We begin with the raw amino-acid sequence, 1393 residues long: DNA-directed RNA polymerase subunit beta' (1393 aa).

4 residues coordinate Zn(2+): Cys72, Cys74, Cys87, and Cys90. 3 residues coordinate Mg(2+): Asp463, Asp465, and Asp467. 4 residues coordinate Zn(2+): Cys812, Cys887, Cys894, and Cys897.

This sequence belongs to the RNA polymerase beta' chain family. The RNAP catalytic core consists of 2 alpha, 1 beta, 1 beta' and 1 omega subunit. When a sigma factor is associated with the core the holoenzyme is formed, which can initiate transcription. Mg(2+) is required as a cofactor. The cofactor is Zn(2+).

The catalysed reaction is RNA(n) + a ribonucleoside 5'-triphosphate = RNA(n+1) + diphosphate. Its function is as follows. DNA-dependent RNA polymerase catalyzes the transcription of DNA into RNA using the four ribonucleoside triphosphates as substrates. The protein is DNA-directed RNA polymerase subunit beta' of Chlamydia felis (strain Fe/C-56) (Chlamydophila felis).